We begin with the raw amino-acid sequence, 242 residues long: Small ribosomal subunit protein uS3 (242 aa).

One can recognise a KH type-2 domain in the interval 39–109; it reads IRQYVKATLA…QIRINVVEVT (71 aa). The segment at 220–242 is disordered; it reads KVNQPKRRQQKRRQQYDDRSNEG. The span at 223–232 shows a compositional bias: basic residues; it reads QPKRRQQKRR. Basic and acidic residues predominate over residues 233-242; that stretch reads QQYDDRSNEG.

The protein belongs to the universal ribosomal protein uS3 family. Part of the 30S ribosomal subunit. Forms a tight complex with proteins S10 and S14.

Functionally, binds the lower part of the 30S subunit head. Binds mRNA in the 70S ribosome, positioning it for translation. This chain is Small ribosomal subunit protein uS3, found in Trichodesmium erythraeum (strain IMS101).